The following is a 559-amino-acid chain: Cation/calcium exchanger 2 (559 aa).

Helical transmembrane passes span 10–30, 86–106, 131–151, 167–187, 203–223, 224–244, 331–351, 362–382, 393–413, 416–436, 480–500, 506–526, and 531–551; these read FGYLTVTFLLVISCLLLGFFT, GFPILGQFLLFLWLLLLFYLL, VAGVTLLSLGNGAPDLFASLV, TVVGGSGFVTCVVVGIISISL, ICFFCAAIGSLALILVYGKIN, FWGALGFCSLYAVYVAFVVLS, WSKPLAVASVTFAPVLLSFLW, AGVVYLIGCLIGIALGFIAGA, WLLPWLAGGFVMSMTWSYISA, LVALLTSLGYIFGVSPSILGL, FALGISLVGCAWEAYPLSIVI, LLESLGFLVAGLVWSFLVLFS, and LGGVMGIGLLVIYLASLSLRI.

The protein belongs to the Ca(2+):cation antiporter (CaCA) (TC 2.A.19) family. Cation/calcium exchanger (CCX) subfamily.

It is found in the membrane. In terms of biological role, membrane-localized H(+)-dependent K(+) and Na(+) transporter. The polypeptide is Cation/calcium exchanger 2 (CCX2) (Arabidopsis thaliana (Mouse-ear cress)).